The primary structure comprises 248 residues: Triosephosphate isomerase (248 aa).

Residues Asn11 and Lys13 each contribute to the substrate site. His95 functions as the Electrophile in the catalytic mechanism. Glu165 (proton acceptor) is an active-site residue.

The protein belongs to the triosephosphate isomerase family. In terms of assembly, homodimer.

It is found in the cytoplasm. The catalysed reaction is D-glyceraldehyde 3-phosphate = dihydroxyacetone phosphate. It catalyses the reaction dihydroxyacetone phosphate = methylglyoxal + phosphate. It participates in carbohydrate degradation; glycolysis; D-glyceraldehyde 3-phosphate from glycerone phosphate: step 1/1. The protein operates within carbohydrate biosynthesis; gluconeogenesis. In terms of biological role, triosephosphate isomerase is an extremely efficient metabolic enzyme that catalyzes the interconversion between dihydroxyacetone phosphate (DHAP) and D-glyceraldehyde-3-phosphate (G3P) in glycolysis and gluconeogenesis. It is also responsible for the non-negligible production of methylglyoxal a reactive cytotoxic side-product that modifies and can alter proteins, DNA and lipids. The protein is Triosephosphate isomerase (tpi1) of Oryzias latipes (Japanese rice fish).